A 427-amino-acid polypeptide reads, in one-letter code: Glutamate-1-semialdehyde 2,1-aminomutase (427 aa).

An N6-(pyridoxal phosphate)lysine modification is found at lysine 265.

Belongs to the class-III pyridoxal-phosphate-dependent aminotransferase family. HemL subfamily. As to quaternary structure, homodimer. It depends on pyridoxal 5'-phosphate as a cofactor.

The protein resides in the cytoplasm. It catalyses the reaction (S)-4-amino-5-oxopentanoate = 5-aminolevulinate. It functions in the pathway porphyrin-containing compound metabolism; protoporphyrin-IX biosynthesis; 5-aminolevulinate from L-glutamyl-tRNA(Glu): step 2/2. This is Glutamate-1-semialdehyde 2,1-aminomutase from Burkholderia multivorans (strain ATCC 17616 / 249).